The primary structure comprises 142 residues: Putative pre-16S rRNA nuclease (142 aa).

It belongs to the YqgF nuclease family.

It localises to the cytoplasm. Its function is as follows. Could be a nuclease involved in processing of the 5'-end of pre-16S rRNA. This is Putative pre-16S rRNA nuclease from Desulfitobacterium hafniense (strain DSM 10664 / DCB-2).